Consider the following 307-residue polypeptide: Homoserine kinase (307 aa).

86 to 96 (PIARGLGSSAA) is a binding site for ATP.

Belongs to the GHMP kinase family. Homoserine kinase subfamily.

Its subcellular location is the cytoplasm. It carries out the reaction L-homoserine + ATP = O-phospho-L-homoserine + ADP + H(+). Its pathway is amino-acid biosynthesis; L-threonine biosynthesis; L-threonine from L-aspartate: step 4/5. Its function is as follows. Catalyzes the ATP-dependent phosphorylation of L-homoserine to L-homoserine phosphate. This is Homoserine kinase from Petrotoga mobilis (strain DSM 10674 / SJ95).